The sequence spans 185 residues: Tetratricopeptide repeat protein 36 homolog (185 aa).

TPR repeat units lie at residues 53 to 86 (SRELELKAIALSESGELDGALELFQQSLNLAQRA), 88 to 119 (VLNNRAQTLRLAKRDEEALDDLNKALELANDQ), and 125 to 158 (CHAHCQRGVLYRKLDNLEAARADFEAAAQLGSKF).

This sequence belongs to the TTC36 family.

The polypeptide is Tetratricopeptide repeat protein 36 homolog (Drosophila melanogaster (Fruit fly)).